Reading from the N-terminus, the 551-residue chain is Protein GZF3 (551 aa).

Positions 17–43 (DNVFEPKSSENLNSLNQSEEEGHIGRW) are disordered. The segment at 131–155 (CKNCLTSTTPLWRRDEHGAMLCNAC) adopts a GATA-type zinc-finger fold. Disordered regions lie at residues 212–260 (GRKA…SATK), 379–400 (LAPT…QIRS), and 467–490 (SISN…AKDL). Over residues 228 to 239 (SQLLMGTSSTAK) the composition is skewed to polar residues. Over residues 244-254 (PKTESKERSDS) the composition is skewed to basic and acidic residues. Positions 388 to 400 (DSNPSEVPNQIRS) are enriched in polar residues. Over residues 467–477 (SISNSVSSSDV) the composition is skewed to low complexity. The span at 478 to 490 (SGRKFENHPAKDL) shows a compositional bias: basic and acidic residues.

The protein resides in the nucleus. The chain is Protein GZF3 (GZF3) from Saccharomyces cerevisiae (strain ATCC 204508 / S288c) (Baker's yeast).